A 119-amino-acid polypeptide reads, in one-letter code: Ribonuclease P protein component (119 aa).

Belongs to the RnpA family. In terms of assembly, consists of a catalytic RNA component (M1 or rnpB) and a protein subunit.

It catalyses the reaction Endonucleolytic cleavage of RNA, removing 5'-extranucleotides from tRNA precursor.. Its function is as follows. RNaseP catalyzes the removal of the 5'-leader sequence from pre-tRNA to produce the mature 5'-terminus. It can also cleave other RNA substrates such as 4.5S RNA. The protein component plays an auxiliary but essential role in vivo by binding to the 5'-leader sequence and broadening the substrate specificity of the ribozyme. This is Ribonuclease P protein component from Pasteurella multocida (strain Pm70).